A 345-amino-acid polypeptide reads, in one-letter code: Alpha-2-HS-glycoprotein (345 aa).

Positions 1–18 (MKSLVLLLCFAQLWGCQS) are cleaved as a signal peptide. The Cystatin fetuin-A-type 1 domain maps to 19-133 (APQGTGLGFR…QFRVMHTQCH (115 aa)). Disulfide bonds link Cys32/Cys336, Cys89/Cys100, Cys114/Cys132, Cys146/Cys149, Cys208/Cys219, and Cys230/Cys247. Asn99 carries N-linked (GlcNAc...) asparagine glycosylation. Ser134 bears the Phosphoserine mark. The residue at position 135 (Thr135) is a Phosphothreonine. Phosphoserine is present on Ser138. A Cystatin fetuin-A-type 2 domain is found at 144–250 (KLCPRCPLLT…EEVSVACKLF (107 aa)). N-linked (GlcNAc...) asparagine glycans are attached at residues Asn156 and Asn176. Ser305, Ser309, Ser312, and Ser314 each carry phosphoserine. A disordered region spans residues 312–334 (SASGETLHSPKVGQPGAAGPVSP).

Belongs to the fetuin family. In terms of processing, phosphorylated by FAM20C in the extracellular medium. Liver is the major site of synthesis, but fetuin is also expressed in limb buds and other extrahepatic tissues during development.

Its subcellular location is the secreted. Functionally, probably involved in differentiation. Its function is as follows. (Microbial infection) Facilitates invasion of hepatocytes by Plasmodium berghei sporozoites. The polypeptide is Alpha-2-HS-glycoprotein (Ahsg) (Mus musculus (Mouse)).